We begin with the raw amino-acid sequence, 207 residues long: Dephospho-CoA kinase (207 aa).

Residues 10 to 207 form the DPCK domain; sequence ILGLTGGIGS…FYLTLSGGQS (198 aa). 18–23 contributes to the ATP binding site; that stretch reads GSGKSA.

This sequence belongs to the CoaE family.

It is found in the cytoplasm. It catalyses the reaction 3'-dephospho-CoA + ATP = ADP + CoA + H(+). The protein operates within cofactor biosynthesis; coenzyme A biosynthesis; CoA from (R)-pantothenate: step 5/5. In terms of biological role, catalyzes the phosphorylation of the 3'-hydroxyl group of dephosphocoenzyme A to form coenzyme A. The polypeptide is Dephospho-CoA kinase (Pseudomonas fluorescens (strain Pf0-1)).